The sequence spans 324 residues: Interleukin-12 subunit beta (324 aa).

An N-terminal signal peptide occupies residues 1 to 22 (MHLQQLVVSWFSLVWLASPIVA). Residues 23-106 (IWELEKNVYV…LSQSLLLLHK (84 aa)) form the Ig-like C2-type domain. The cysteines at positions 50 and 90 are disulfide-linked. 3 N-linked (GlcNAc...) asparagine glycosylation sites follow: Asn-125, Asn-135, and Asn-218. In terms of domain architecture, Fibronectin type-III spans 233 to 324 (PPKNLQLNPL…WSEWASVSCN (92 aa)).

Belongs to the IL-12B family. As to quaternary structure, heterodimer with IL12A; disulfide-linked. The heterodimer is known as interleukin IL-12. Heterodimer with IL23A; disulfide-linked. The heterodimer is known as interleukin IL-23. Also secreted as a monomer. Interacts with NBR1; this interaction promotes IL-12 secretion.

The protein resides in the secreted. Its function is as follows. Cytokine that can act as a growth factor for activated T and NK cells, enhance the lytic activity of NK/lymphokine-activated killer cells, and stimulate the production of IFN-gamma by resting PBMC. Functionally, associates with IL23A to form the IL-23 interleukin, a heterodimeric cytokine which functions in innate and adaptive immunity. IL-23 may constitute with IL-17 an acute response to infection in peripheral tissues. IL-23 binds to a heterodimeric receptor complex composed of IL12RB1 and IL23R, activates the Jak-Stat signaling cascade, stimulates memory rather than naive T-cells and promotes production of pro-inflammatory cytokines. IL-23 induces autoimmune inflammation and thus may be responsible for autoimmune inflammatory diseases and may be important for tumorigenesis. The polypeptide is Interleukin-12 subunit beta (IL12B) (Sus scrofa (Pig)).